Consider the following 348-residue polypeptide: tRNA N6-adenosine threonylcarbamoyltransferase (348 aa).

Positions 119 and 123 each coordinate Fe cation. Residues 141–145, aspartate 174, glycine 187, aspartate 191, and asparagine 280 each bind substrate; that span reads LVSGG. Residue aspartate 310 coordinates Fe cation.

This sequence belongs to the KAE1 / TsaD family. It depends on Fe(2+) as a cofactor.

It is found in the cytoplasm. The catalysed reaction is L-threonylcarbamoyladenylate + adenosine(37) in tRNA = N(6)-L-threonylcarbamoyladenosine(37) in tRNA + AMP + H(+). Functionally, required for the formation of a threonylcarbamoyl group on adenosine at position 37 (t(6)A37) in tRNAs that read codons beginning with adenine. Is involved in the transfer of the threonylcarbamoyl moiety of threonylcarbamoyl-AMP (TC-AMP) to the N6 group of A37, together with TsaE and TsaB. TsaD likely plays a direct catalytic role in this reaction. This chain is tRNA N6-adenosine threonylcarbamoyltransferase, found in Enterococcus faecalis (strain ATCC 700802 / V583).